A 290-amino-acid chain; its full sequence is tRNA-cytidine(32) 2-sulfurtransferase (290 aa).

Residues 36–41 (SGGKDS) carry the PP-loop motif motif. Positions 111, 114, and 202 each coordinate [4Fe-4S] cluster. The segment at 259–290 (DPWLDAEDEEAEDCGEPAGDGVVSLGGARGGR) is disordered. The segment covering 262–273 (LDAEDEEAEDCG) has biased composition (acidic residues).

It belongs to the TtcA family. As to quaternary structure, homodimer. It depends on Mg(2+) as a cofactor. [4Fe-4S] cluster is required as a cofactor.

The protein localises to the cytoplasm. The catalysed reaction is cytidine(32) in tRNA + S-sulfanyl-L-cysteinyl-[cysteine desulfurase] + AH2 + ATP = 2-thiocytidine(32) in tRNA + L-cysteinyl-[cysteine desulfurase] + A + AMP + diphosphate + H(+). It participates in tRNA modification. Its function is as follows. Catalyzes the ATP-dependent 2-thiolation of cytidine in position 32 of tRNA, to form 2-thiocytidine (s(2)C32). The sulfur atoms are provided by the cysteine/cysteine desulfurase (IscS) system. The protein is tRNA-cytidine(32) 2-sulfurtransferase of Anaeromyxobacter dehalogenans (strain 2CP-C).